Reading from the N-terminus, the 170-residue chain is MKVRVGTTNPVKVRATERAFLRTFPDREITVEAVSVDPGVPPQPVGMEEVHQGAKNRAREAWNRGSYSVGLEAGLIRVGDVYVDLHVAVVRDPKGRETVGTSPGFQLPPDVTEEALSGEEVGEVFSELVGVREIGKRSGAIGVLSNGKVLREDLCELAILMALIGLETSR.

Thr-7–Lys-12 is a substrate binding site. Position 37 (Asp-37) interacts with Mg(2+).

It belongs to the YjjX NTPase family. Homodimer. Requires Mg(2+) as cofactor. Mn(2+) serves as cofactor.

The catalysed reaction is XTP + H2O = XDP + phosphate + H(+). It carries out the reaction ITP + H2O = IDP + phosphate + H(+). Phosphatase that hydrolyzes non-canonical purine nucleotides such as XTP and ITP to their respective diphosphate derivatives. Probably excludes non-canonical purines from DNA/RNA precursor pool, thus preventing their incorporation into DNA/RNA and avoiding chromosomal lesions. This is Probable inosine/xanthosine triphosphatase from Methanopyrus kandleri (strain AV19 / DSM 6324 / JCM 9639 / NBRC 100938).